Consider the following 462-residue polypeptide: Argininosuccinate lyase (462 aa).

Belongs to the lyase 1 family. Argininosuccinate lyase subfamily.

It localises to the cytoplasm. The enzyme catalyses 2-(N(omega)-L-arginino)succinate = fumarate + L-arginine. It functions in the pathway amino-acid biosynthesis; L-arginine biosynthesis; L-arginine from L-ornithine and carbamoyl phosphate: step 3/3. The sequence is that of Argininosuccinate lyase from Bacillus mycoides (strain KBAB4) (Bacillus weihenstephanensis).